The following is a 364-amino-acid chain: Flavonoid 3'-O-methyltransferase 3 (364 aa).

Asp-232 lines the S-adenosyl-L-methionine pocket. His-270 serves as the catalytic Proton acceptor.

It belongs to the class I-like SAM-binding methyltransferase superfamily. Cation-independent O-methyltransferase family. As to quaternary structure, homodimer.

The enzyme catalyses quercetin + S-adenosyl-L-methionine = isorhamnetin + S-adenosyl-L-homocysteine + H(+). It catalyses the reaction luteolin + S-adenosyl-L-methionine = chrysoeriol + S-adenosyl-L-homocysteine + H(+). It carries out the reaction a 3'-hydroxyflavone + S-adenosyl-L-methionine = a 3'-methoxyflavone + S-adenosyl-L-homocysteine + H(+). The catalysed reaction is rhamnetin + S-adenosyl-L-methionine = rhamnacene + S-adenosyl-L-homocysteine + H(+). The enzyme catalyses 3',4',7,8-tetrahydroxyflavone + S-adenosyl-L-methionine = 4',7,8-trihydroxy-3'-methoxyflavone-7-olate + S-adenosyl-L-homocysteine + H(+). It catalyses the reaction taxifolin + S-adenosyl-L-methionine = taxifolin 3'-methyl ether + S-adenosyl-L-homocysteine + H(+). Its pathway is flavonoid metabolism. Flavonoid 3'-O-methyltransferase involved in the biosynthesis of polymethoxylated flavonoids natural products such as pebrellin, aroma compounds which contribute to the flavor of peppermint, and exhibit pharmacological activities such as anti-allergic, anti-oxidant, antibacterial, anti-proliferative, and anti-inflammatory effects. Catalyzes S-adenosylmethionine-dependent regioselective 3'-O-methylation of flavonoids; active on various hydroxylated flavonoid substrates, including quercetin, rhamnetin, luteolin (LUT), 7,8,3'4'-tetrahydroxy-flavone and taxifolin, and, with a lower efficiency, eupatorin and hesperetin. This Mentha piperita (Peppermint) protein is Flavonoid 3'-O-methyltransferase 3.